The primary structure comprises 301 residues: Glycine--tRNA ligase alpha subunit (301 aa).

It belongs to the class-II aminoacyl-tRNA synthetase family. As to quaternary structure, tetramer of two alpha and two beta subunits.

It localises to the cytoplasm. The catalysed reaction is tRNA(Gly) + glycine + ATP = glycyl-tRNA(Gly) + AMP + diphosphate. The chain is Glycine--tRNA ligase alpha subunit from Polaromonas sp. (strain JS666 / ATCC BAA-500).